The primary structure comprises 459 residues: Sulfite oxidase (459 aa).

A Cytochrome b5 heme-binding domain is found at 4–83 (YPRYTREEVG…LQQYKVGELS (80 aa)). Heme b-binding residues include H40, H65, and H69. The tract at residues 83–115 (SPDEAPAAPDAQDPFAGDPPRHPGLRVNSQKPF) is disordered. The span at 85–100 (DEAPAAPDAQDPFAGD) shows a compositional bias: low complexity. The segment at 86-95 (EAPAAPDAQD) is hinge. The moco domain stretch occupies residues 96 to 323 (PFAGDPPRHP…PSRWQQNDYK (228 aa)). Mo-molybdopterin-binding positions include 136–140 (FTRNH), C185, D244, H283, R288, and 299–301 (SVK). The segment at 324–459 (GFSPCVDWDT…RGVLSTAWHR (136 aa)) is homodimerization.

In terms of assembly, homodimer. Requires heme b as cofactor. Mo-molybdopterin serves as cofactor.

It localises to the mitochondrion intermembrane space. The catalysed reaction is sulfite + O2 + H2O = sulfate + H2O2. The protein operates within energy metabolism; sulfur metabolism. Catalyzes the oxidation of sulfite to sulfate, the terminal reaction in the oxidative degradation of sulfur-containing amino acids. The sequence is that of Sulfite oxidase (SUOX) from Gallus gallus (Chicken).